We begin with the raw amino-acid sequence, 609 residues long: Glutamine--fructose-6-phosphate aminotransferase [isomerizing] (609 aa).

The active-site Nucleophile; for GATase activity is C2. The Glutamine amidotransferase type-2 domain occupies 2-219; that stretch reads CGIFGYLGNQ…SGEFAIVSQG (218 aa). SIS domains follow at residues 285-426 and 458-599; these read LSDV…VHGA and WAQP…IDCP. Catalysis depends on K604, which acts as the For Fru-6P isomerization activity.

Homodimer.

It localises to the cytoplasm. The catalysed reaction is D-fructose 6-phosphate + L-glutamine = D-glucosamine 6-phosphate + L-glutamate. Its function is as follows. Catalyzes the first step in hexosamine metabolism, converting fructose-6P into glucosamine-6P using glutamine as a nitrogen source. In Chlamydia pneumoniae (Chlamydophila pneumoniae), this protein is Glutamine--fructose-6-phosphate aminotransferase [isomerizing].